The following is a 4421-amino-acid chain: MIKTSKYGLGFKWAPEFRWLLPDAAEELASPMKSDEGGLCPSTGQAMESVGFVYDNHVKIDCRCILGQEWHVQSNLIRDIFVHEDLHVVEVLTKTAVKSGTAILIKSPLHSLGGFPKGYVMGLFRSYKTKRYVVHHLSMTTSTTNFGEDFFGWIVPFGFMPSYVHKWFQFCRLYIEESDLIISNFKFDDYDFSVEAAYAEVHAEPKGKYSQKAYALLRQYRGIKPVLFVDQYGCDYSGKLADCLQAYGHYSLQDMRQKQSVWLANCDFDIVVAWHVVRDSRFVMRLQTIATICGIKYVAQPTEDVVDGDVVIREPVHLLSADAIVLKLPSLMKVMTHMDDFSIKSIYNVDLCDCGFVMQYGYVDCFNDNCDFYGWVSGNMMDGFSCPLCCTVYDSSEVKAQSSGVIPENPVLFTNSTDTVNPDSFNLYGYSVTPFGSCIYWSPRPGLWIPIIKSSVKSYDDLVYSGVVGCKSIVKETALITHALYLDYVQCKCGNLEQNHILGVNNSWCRQLLLNRGDYNMLLKNIDLFVKRRADFACKFAVCGDGFVPFLLDGLIPRSYYLIQSGIFFTSLMSQFSQEVSDMCLKMCILFMDRVSVATFYIEHYVNRLVTQFKLLGTTLVNKMVNWFNTMLDASAPATGWLLYQLLNGFFVVSQANLNFVALIPDYAKILVNKFYTFFKLLLECVTVDVLKDMPVLKTINGLVCIVGNKFYNVSTGLIPGFVLPCNAQEQQIYFFEGVAESVIVEDDVIENVKSSLSSYEYCQPPKSVEKICIIDNMYMGKCGDKFFPIVMNDKNICLLDHAWRFPCAGRKVNFNEKPVVMEIPSLMTVKVMFDLDSTFDDILGKVCSEFEVEKGVTVDDFVAVVCDAIENALNSCKEHPVVGYQVRAFLNKLNENVVYLFDEAGDEAMASRMYCTFAIEDVEDVISSEAVEDTIDGVVEDTINDDEDVVTGDNDDEDVVTGDNDDEDVVTGDNDDEDVVTGDNDDEDVVTGDNDDEDVVTGDNDDEDVVTGDNDDEDVVTGDNNDEDVVTGDNNDEESVTGDNDDQIVVTGDDVDDIESIYDFDTYKALLVFNDVYNDALFVSYGSSVETETYFKVNGLWSPTITHTNCWLRSVLLVMQKLPFKFKDLAIENMWLSYKVGYNQSFVDYLLTTIPKAIVLPQGGYVADFAYWFLNQFDINAYANWCCLKCGFSFDLNGLDAVFFYGDIVSHVCKCGHNMTLIAADLPCTLHFSLFDDNFCAFCTPKKIFIAACAVDVNVCHSVAVIGDEQIDGKFVTKFSGDKFDFIVGYGMSFSMSSFELAQLYGLCITPNVCFVKGDIINVARLVKADVIVNPANGHMLHGGGVAKAIAVAAGKKFSKETAAMVKSKGVCQVGDCYVSTGGKLCKTILNIVGPDARQDGRQSYVLLARAYKHLNNYDCCLSTLISAGIFSVPADVSLTYLLGVVDKQVILVSNNKEDFDIIQKCQITSVVGTKALAVRLTANVGRVIKFETDAYKLFLSGDDCFVSNSSVIQEVLLLRHDIQLNNDVRDYLLSKMTSLPKDWRLINKFDVINGVKTVKYFECPNSIYICSQGKDFGYVCDGSFYKATVNQVCVLLAKKIDVLLTVDGVNFKSISLTVGEVFGKILGNVFCDGIDVTKLKCSDFYADKILYQYENLSLADISAVQSSFGFDQQQLLAYYNFLTVCKWSVVVNGPFFSFEQSHNNCYVNVACLMLQHINLKFNKWQWQEAWYEFRAGRPHRLVALVLAKGHFKFDEPSDATDFIRVVLKQADLSGAICELELICDCGIKQESRVGVDAVMHFGTLAKTDLFNGYKIGCNCAGRIVHCTKLNVPFLICSNTPLSKDLPDDVVAANMFMGVGVGHYTHLKCGSPYQHYDACSVKKYTGVSGCLTDCLYLKNLTQTFTSMLTNYFLDDVEMVAYNPDLSQYYCDNGKYYTKPIIKAQFKPFAKVDGVYTNFKLVGHDICAQLNDKLGFNVDLPFVEYKVTVWPVATGDVVLASDDLYVKRYFKGCETFGKPVIWFCHDEASLNSLTYFNKPSFKSENRYSVLSVDSVSEESQGNVVTSVMESQISTKEVKLKGVRKTVKIEDAIIVNDENSSIKVVKSLSLVDVWDMYLTGCDYVVWVANELSRLVKSPTVREYIRYGIKPITIPIDLLCLRDDNQTLLVPKIFKARAIEFYGFLKWLFIYVFSLLHFTNDKTIFYTTEIASKFTFNLFCLALKNAFQTFRWSIFIKGFLVVATVFLFWFNFLYINVIFSDFYLPNISVFPIFVGRIVMWIKATFGLVTICDFYSKLGVGFTSHFCNGSFICELCHSGFDMLDTYAAIDFVQYEVDRRVLFDYVSLVKLIVELVIGYSLYTVWFYPLFCLIGLQLFTTWLPDLFMLETMHWLIRFIVFVANMLPAFVLLRFYIVVTAMYKVVGFIRHIVYGCNKAGCLFCYKRNCSVRVKCSTIVGGVIRYYDITANGGTGFCVKHQWNCFNCHSFKPGNTFITVEAAIELSKELKRPVNPTDASHYVVTDIKQVGCMMRLFYDRDGQRVYDDVDASLFVDINNLLHSKVKVVPNLYVVVVESDADRANFLNAVVFYAQSLYRPILLVDKKLITTACNGISVTQIMFDVYVDTFMSHFDVDRKSFNNFVNIAHASLREGVQLEKVLDTFVGCVRKCCSIDSDVETRFITKSMISAVAAGLEFTDENYNNLVPTYLKSDNIVAADLGVLIQNGAKHVQGNVAKVANISCIWFIDAFNQLTADLQHKLKKACVKTGLKLKLTFNKQEASVPILTTPFSLKGGVVLSNLLYILFFISLICFILLWALLPTYSVYKSDIHLPAYASFKVIDNGVVRDISVNDLCFANKFFQFDQWYESTFGSVYYHNSMDCPIVVAVMDEDIGSTMFNVPTKVLRYGFHVLHFLTYAFASDSVQCYTPHIQISYNDFYASGCVLSSLCTMFKRGDGTPHPYCYTDGVMKNASLYTSLVPHTRYSLANSNGFIRFPDVISEGIVRIVRTRSMTYCRVGACEYAEEGICFNFNSSWVLNNDYYRSMPGTFCGRDFFDLFYQFFSSLIRPIDFFSLTASSIFGAILAIVVVLVFYYLIKLKRAFGDYTSVVVINVIVWCINFLMLFVFQVYPICACVYACFYFYVTLYFPSEISVIMHLQWIVMYGAIMPFWFCVTYVAMVIANHVLWLFSYCRKIGVNVCSDSTFEETSLTTFMITKDSYCRLKNSVSDVAYNRYLSLYNKYRYYSGKMDTAAYREAACSQLAKAMETFNHNNGNDVLYQPPTASVSTSFLQSGIVKMVSPTSKIEPCLVSVTYGSMTLNGLWLDDKVYCPRHVICLSSNMNEPDYSALLCRVTLGDFTIMSGRMSLTVVSYQMQGCQLVLTVSLQNPYTPKYTFGVVKPGETFTVLAAYNGRPQGAFHVTMRSSYTIKGSFLCGSCGSVGYVLTGDSVKFVYMHQLELSTGCHTGTDFNGNFYGPYRDAQVVQLPVKDYVQTVNVIAWLYAAILNNCAWFVQNDVCSIEDFNVWAMTNGFSQVKADLVLDALASMTGVSIETLLAAIKRLYMGFQGRQILGSCTFEDELAPSDVYQQLAGVKLQSKTKRFIKETIYWILISTFLFSCIISAFVKWTIFMYINTHMIGVTLCVLCFVSFMMLLVKHKHFYLTMYIIPVLCTLFYVNYLVVYKEGFRGFTYVWLSHFVPAVNFTYVYEVFYGCILCVFAIFITMHSINHDIFSLMFLVGRIVTLISMWYFGSNLEEDVLLFITAFLGTYTWTTILSLAIAKIVANWLSVNIFYFTDVPYIKLILLSYLFIGYILSCYWGFFSLLNSVFRMPMGVYNYKISVQELRYMNANGLRPPRNSFEAILLNLKLLGIGGVPVIEVSQIQSKLTDVKCANVVLLNCLQHLHVASNSKLWQYCSVLHNEILSTSDLSVAFDKLAQLLIVLFSNPAAVDTKCLASIDEVSDDYVQDSTVLQALQSEFVNMASFVEYEVAKKNLADAKNSGSVNQQQIKQLEKACNIAKSVYERDKAVARKLERMADLALTNMYKEARINDKKSKVVSALQTMLFSMVRKLDNQALNSILDNAVKGCVPLSAIPALAANTLTIIIPDKQVFDKVVDNVYVTYAGSVWHIQTVQDADGINKQLTDISVDSNWPLVIIANRYNEVANAVMQNNELMPHKLKIQVVNSGSDINCNIPTQCYYNNVSSGRIVYAVLSDVDGLKYTKIMKDDGNCVVLELDPPCKFSIQDVKGLKIKYLYFIKGCNTLARGWVVGTLSSTIRLQAGVATEYAANSSILSLCAFSVDPKKTYLDYIQQGGVPIINCVKMLCDHAGTGMAITIKPEATINQDSYGGASVCIYCRARVEHPDVDGICKLRGKFVQVPLGIKDPILYVLTHDVCQVCGFWRDGSCSCVGSSVAVQSKDLNFLNGLGVLV.

The CoV Nsp1 globular domain occupies 54–174 (YDNHVKIDCR…HKWFQFCRLY (121 aa)). Residues 192-222 (FSVEAAYAEVHAEPKGKYSQKAYALLRQYRG) enclose the BetaCoV Nsp1 C-terminal domain. The CoV Nsp2 N-terminal domain occupies 226–488 (VLFVDQYGCD…LITHALYLDY (263 aa)). 4 residues coordinate Zn(2+): cysteine 365, cysteine 370, cysteine 386, and cysteine 389. A C4 region spans residues 365–389 (CFNDNCDFYGWVSGNMMDGFSCPLC). A CoV Nsp2 middle domain is found at 493–681 (CGNLEQNHIL…VNKFYTFFKL (189 aa)). Residues 697–809 (LKTINGLVCI…LDHAWRFPCA (113 aa)) form the CoV Nsp2 C-terminal domain. The Ubiquitin-like 1 domain occupies 811 to 923 (RKVNFNEKPV…MYCTFAIEDV (113 aa)). A run of 9 repeats spans residues 945–954 (NDDEDVVTGD), 955–964 (NDDEDVVTGD), 965–974 (NDDEDVVTGD), 975–984 (NDDEDVVTGD), 985–994 (NDDEDVVTGD), 995–1004 (NDDEDVVTGD), 1005–1014 (NDDEDVVTGD), 1015–1024 (NDDEDVVTGD), and 1025–1034 (NNDEDVVTGD). A 9 X 10 AA tandem repeat of N-[DN]-D-E-D-V-V-T-G-D region spans residues 945 to 1034 (NDDEDVVTGD…NNDEDVVTGD (90 aa)). Residues 947 to 1042 (DEDVVTGDND…GDNNDEESVT (96 aa)) are disordered. In terms of domain architecture, Peptidase C16 1 spans 1073–1323 (VFNDVYNDAL…VCFVKGDIIN (251 aa)). The active-site For PL1-PRO activity is the cysteine 1111. The Zn(2+) site is built by cysteine 1188, cysteine 1191, cysteine 1214, and cysteine 1216. The C4-type 1 zinc-finger motif lies at 1188 to 1216 (CLKCGFSFDLNGLDAVFFYGDIVSHVCKC). Active-site for PL1-PRO activity residues include histidine 1262 and aspartate 1273. The Macro domain maps to 1301–1472 (ELAQLYGLCI…IIQKCQITSV (172 aa)). Positions 1528-1599 (NDVRDYLLSK…TVNQVCVLLA (72 aa)) constitute a DPUP domain. The 56-residue stretch at 1599–1654 (AKKIDVLLTVDGVNFKSISLTVGEVFGKILGNVFCDGIDVTKLKCSDFYADKILYQ) folds into the Ubiquitin-like 2 domain. The region spanning 1668–1928 (SSFGFDQQQL…MVAYNPDLSQ (261 aa)) is the Peptidase C16 2 domain. The For PL2-PRO activity role is filled by cysteine 1707. The Zn(2+) site is built by cysteine 1785, cysteine 1787, cysteine 1819, and cysteine 1821. The segment at 1785–1821 (CDCGIKQESRVGVDAVMHFGTLAKTDLFNGYKIGCNC) adopts a C4-type 2 zinc-finger fold. Active-site for PL2-PRO activity residues include histidine 1864 and aspartate 1878. The 102-residue stretch at 1942–2043 (IKAQFKPFAK…TYFNKPSFKS (102 aa)) folds into the Nucleic acid-binding domain. One can recognise a G2M domain in the interval 2058-2207 (ESQGNVVTSV…NDKTIFYTTE (150 aa)). The next 3 membrane-spanning stretches (helical) occupy residues 2176 to 2196 (AIEFYGFLKWLFIYVFSLLHF), 2237 to 2257 (FLVVATVFLFWFNFLYINVIF), and 2268 to 2288 (FPIFVGRIVMWIKATFGLVTI). An HD1 region spans residues 2176–2413 (AIEFYGFLKW…FVLLRFYIVV (238 aa)). A 3Ecto domain is found at 2273 to 2334 (GRIVMWIKAT…AIDFVQYEVD (62 aa)). 2 cysteine pairs are disulfide-bonded: cysteine 2289–cysteine 2313 and cysteine 2304–cysteine 2310. The next 2 helical transmembrane spans lie at 2351 to 2371 (LVIGYSLYTVWFYPLFCLIGL) and 2393 to 2413 (FIVFVANMLPAFVLLRFYIVV). Residues 2421 to 2511 (GFIRHIVYGC…ELKRPVNPTD (91 aa)) are Y1. Residues 2421-2788 (GFIRHIVYGC…LTTPFSLKGG (368 aa)) enclose the CoV Nsp3 Y domain. The Zn(2+) site is built by histidine 2425, cysteine 2430, cysteine 2435, cysteine 2438, cysteine 2471, histidine 2474, cysteine 2478, and cysteine 2481. A ZF1 region spans residues 2425–2438 (HIVYGCNKAGCLFC). Residues 2471 to 2481 (CVKHQWNCFNC) are ZF2. The interval 2512–2604 (ASHYVVTDIK…LVDKKLITTA (93 aa)) is Y2. Residues 2512–2788 (ASHYVVTDIK…LTTPFSLKGG (277 aa)) are coV-Y. The Y3 stretch occupies residues 2605–2687 (CNGISVTQIM…KSMISAVAAG (83 aa)). The tract at residues 2688 to 2788 (LEFTDENYNN…LTTPFSLKGG (101 aa)) is Y4. 5 helical membrane-spanning segments follow: residues 2794–2814 (LLYILFFISLICFILLWALLP), 3069–3089 (ASSIFGAILAIVVVLVFYYLI), 3101–3121 (VVVINVIVWCINFLMLFVFQV), 3128–3148 (VYACFYFYVTLYFPSEISVIM), and 3153–3173 (IVMYGAIMPFWFCVTYVAMVI). Residues 2794–3173 (LLYILFFISL…FCVTYVAMVI (380 aa)) form an HD2 region. In terms of domain architecture, Nsp4C spans 3187–3284 (IGVNVCSDST…TASVSTSFLQ (98 aa)). A Peptidase C30 domain is found at 3285-3587 (SGIVKMVSPT…YQQLAGVKLQ (303 aa)). Active-site for 3CL-PRO activity residues include histidine 3325 and cysteine 3429. Helical transmembrane passes span 3601–3621 (ILISTFLFSCIISAFVKWTIF), 3626–3646 (THMIGVTLCVLCFVSFMMLLV), 3651–3671 (FYLTMYIIPVLCTLFYVNYLV), 3694–3714 (FTYVYEVFYGCILCVFAIFIT), 3722–3742 (IFSLMFLVGRIVTLISMWYFG), 3750–3770 (LLFITAFLGTYTWTTILSLAI), and 3793–3813 (LILLSYLFIGYILSCYWGFFS). The HD3 stretch occupies residues 3601 to 3813 (ILISTFLFSC…ILSCYWGFFS (213 aa)). A RdRp Nsp7 cofactor domain is found at 3875-3963 (SKLTDVKCAN…DYVQDSTVLQ (89 aa)). The region spanning 3964–4160 (ALQSEFVNMA…YNEVANAVMQ (197 aa)) is the RdRp Nsp8 cofactor domain. In terms of domain architecture, Nsp9 ssRNA-binding spans 4161-4270 (NNELMPHKLK…GTLSSTIRLQ (110 aa)). In terms of domain architecture, ExoN/MTase coactivator spans 4271-4408 (AGVATEYAAN…CVGSSVAVQS (138 aa)). Cysteine 4344, cysteine 4347, histidine 4353, cysteine 4360, cysteine 4386, cysteine 4389, cysteine 4397, and cysteine 4399 together coordinate Zn(2+). 2 zinc fingers span residues 4344–4360 (CIYCRARVEHPDVDGIC) and 4386–4399 (CQVCGFWRDGSCSC).

This sequence belongs to the coronaviruses polyprotein 1ab family. 3CL-PRO exists as monomer and homodimer. Eight copies of nsp7 and eight copies of nsp8 assemble to form a heterohexadecamer. Nsp9 is a dimer. Nsp10 forms a dodecamer. In terms of processing, specific enzymatic cleavages in vivo by its own proteases yield mature proteins. 3CL-PRO and PL-PRO proteinases are autocatalytically processed.

The protein localises to the host membrane. The protein resides in the host cytoplasm. It is found in the host perinuclear region. It catalyses the reaction Thiol-dependent hydrolysis of ester, thioester, amide, peptide and isopeptide bonds formed by the C-terminal Gly of ubiquitin (a 76-residue protein attached to proteins as an intracellular targeting signal).. The enzyme catalyses TSAVLQ-|-SGFRK-NH2 and SGVTFQ-|-GKFKK the two peptides corresponding to the two self-cleavage sites of the SARS 3C-like proteinase are the two most reactive peptide substrates. The enzyme exhibits a strong preference for substrates containing Gln at P1 position and Leu at P2 position.. It carries out the reaction a 5'-end diphospho-ribonucleoside in mRNA + GTP + H(+) = a 5'-end (5'-triphosphoguanosine)-ribonucleoside in mRNA + diphosphate. The papain-like proteinase 1 (PL1-PRO) and papain-like proteinase 2 (PL2-PRO) are responsible for the cleavages located at the N-terminus of the replicase polyprotein. In addition, PLP2 possesses a deubiquitinating/deISGylating activity and processes both 'Lys-48'- and 'Lys-63'-linked polyubiquitin chains from cellular substrates. Antagonizes innate immune induction of type I interferon by blocking the phosphorylation, dimerization and subsequent nuclear translocation of host IRF-3. In terms of biological role, responsible for the majority of cleavages as it cleaves the C-terminus of replicase polyprotein at 11 sites. Recognizes substrates containing the core sequence [ILMVF]-Q-|-[SGACN]. Inhibited by the substrate-analog Cbz-Val-Asn-Ser-Thr-Leu-Gln-CMK. Also contains an ADP-ribose-1''-phosphate (ADRP)-binding function. Its function is as follows. Nsp7-nsp8 hexadecamer may possibly confer processivity to the polymerase, maybe by binding to dsRNA or by producing primers utilized by the latter. Functionally, catalytic subunit of viral RNA capping enzyme which catalyzes the RNA guanylyltransferase reaction for genomic and sub-genomic RNAs. The kinase-like NiRAN domain of NSP12 transfers RNA to the amino terminus of NSP9, forming a covalent RNA-protein intermediate. Subsequently, the NiRAN domain transfers RNA to GDP, forming the core cap structure GpppA-RNA. The NSP14 and NSP16 methyltransferases then add methyl groups to form functional cap structures. Binds to the 40S ribosomal subunit and inhibits host translation. The nsp1-40S ribosome complex further induces an endonucleolytic cleavage near the 5'UTR of host mRNAs, targeting them for degradation. By suppressing host gene expression, nsp1 facilitates efficient viral gene expression in infected cells and evasion from host immune response. In Human coronavirus HKU1 (isolate N5) (HCoV-HKU1), this protein is Replicase polyprotein 1a.